Here is a 438-residue protein sequence, read N- to C-terminus: GTPase Der (438 aa).

2 consecutive EngA-type G domains span residues 4-168 (PIVA…PKGY) and 177-352 (IRIA…TNYS). GTP contacts are provided by residues 10–17 (GRPNVGKS), 57–61 (DTGGI), 120–123 (NKID), 183–190 (GKPNVGKS), 230–234 (DTAGL), and 295–298 (NKWD). In terms of domain architecture, KH-like spans 353–437 (KRISTGVLND…GIKMEFRERK (85 aa)).

Belongs to the TRAFAC class TrmE-Era-EngA-EngB-Septin-like GTPase superfamily. EngA (Der) GTPase family. As to quaternary structure, associates with the 50S ribosomal subunit.

In terms of biological role, GTPase that plays an essential role in the late steps of ribosome biogenesis. This chain is GTPase Der, found in Clostridium tetani (strain Massachusetts / E88).